The primary structure comprises 403 residues: tRNA(Met) cytidine acetate ligase (403 aa).

Residues 7–20, Gly102, Asn168, and Arg193 each bind ATP; that span reads IVEY…HLYH.

Belongs to the TmcAL family.

It is found in the cytoplasm. The enzyme catalyses cytidine(34) in elongator tRNA(Met) + acetate + ATP = N(4)-acetylcytidine(34) in elongator tRNA(Met) + AMP + diphosphate. Its function is as follows. Catalyzes the formation of N(4)-acetylcytidine (ac(4)C) at the wobble position of elongator tRNA(Met), using acetate and ATP as substrates. First activates an acetate ion to form acetyladenylate (Ac-AMP) and then transfers the acetyl group to tRNA to form ac(4)C34. In Clostridium tetani (strain Massachusetts / E88), this protein is tRNA(Met) cytidine acetate ligase.